A 196-amino-acid polypeptide reads, in one-letter code: Lipoprotein signal peptidase (196 aa).

The next 2 helical transmembrane spans lie at 75–95 and 97–117; these read IVFL…MMSS and TIGG…NLID. Active-site residues include Asp126 and Asp144. The chain crosses the membrane as a helical span at residues 135-155; it reads YSFPVFNLADCFITLGVIILV.

This sequence belongs to the peptidase A8 family.

It localises to the cell inner membrane. The catalysed reaction is Release of signal peptides from bacterial membrane prolipoproteins. Hydrolyzes -Xaa-Yaa-Zaa-|-(S,diacylglyceryl)Cys-, in which Xaa is hydrophobic (preferably Leu), and Yaa (Ala or Ser) and Zaa (Gly or Ala) have small, neutral side chains.. It participates in protein modification; lipoprotein biosynthesis (signal peptide cleavage). Its function is as follows. This protein specifically catalyzes the removal of signal peptides from prolipoproteins. The chain is Lipoprotein signal peptidase from Rickettsia bellii (strain OSU 85-389).